The following is a 225-amino-acid chain: uncharacterized protein (225 aa).

Residues 1–22 form the signal peptide; the sequence is MLQHYSVSWKKGLAALCLLAVA. One can recognise a 4Fe-4S ferredoxin-type domain in the interval 161–190; that stretch reads GNLTAAEEKKTGCLVCLDSCPVGIVSNATY.

This is an uncharacterized protein from Escherichia coli (strain K12).